The sequence spans 302 residues: uncharacterized protein (302 aa).

Disordered regions lie at residues 15–34, 143–195, and 221–246; these read RHST…RFHK, GMPL…PSHL, and GSEA…RESV. Basic and acidic residues predominate over residues 172 to 189; sequence HSDENKATGQGRENRDQP.

This is an uncharacterized protein from Homo sapiens (Human).